The primary structure comprises 736 residues: Phosphoribosylformylglycinamidine synthase subunit PurL (736 aa).

The active site involves histidine 49. The ATP site is built by tyrosine 52 and lysine 91. Mg(2+) is bound at residue glutamate 93. Substrate contacts are provided by residues 94-97 (SHNH) and arginine 116. The active-site Proton acceptor is the histidine 95. Mg(2+) is bound at residue aspartate 117. Glutamine 240 contacts substrate. Position 268 (aspartate 268) interacts with Mg(2+). 312-314 (ESQ) contacts substrate. ATP is bound by residues aspartate 493 and glycine 530. A Mg(2+)-binding site is contributed by asparagine 531. Serine 533 serves as a coordination point for substrate.

This sequence belongs to the FGAMS family. As to quaternary structure, monomer. Part of the FGAM synthase complex composed of 1 PurL, 1 PurQ and 2 PurS subunits.

It is found in the cytoplasm. It catalyses the reaction N(2)-formyl-N(1)-(5-phospho-beta-D-ribosyl)glycinamide + L-glutamine + ATP + H2O = 2-formamido-N(1)-(5-O-phospho-beta-D-ribosyl)acetamidine + L-glutamate + ADP + phosphate + H(+). The protein operates within purine metabolism; IMP biosynthesis via de novo pathway; 5-amino-1-(5-phospho-D-ribosyl)imidazole from N(2)-formyl-N(1)-(5-phospho-D-ribosyl)glycinamide: step 1/2. Its function is as follows. Part of the phosphoribosylformylglycinamidine synthase complex involved in the purines biosynthetic pathway. Catalyzes the ATP-dependent conversion of formylglycinamide ribonucleotide (FGAR) and glutamine to yield formylglycinamidine ribonucleotide (FGAM) and glutamate. The FGAM synthase complex is composed of three subunits. PurQ produces an ammonia molecule by converting glutamine to glutamate. PurL transfers the ammonia molecule to FGAR to form FGAM in an ATP-dependent manner. PurS interacts with PurQ and PurL and is thought to assist in the transfer of the ammonia molecule from PurQ to PurL. The sequence is that of Phosphoribosylformylglycinamidine synthase subunit PurL from Rhodopseudomonas palustris (strain HaA2).